The chain runs to 788 residues: Multifunctional tryptophan biosynthesis protein (788 aa).

One can recognise a Glutamine amidotransferase type-1 domain in the interval 12–207 (DILMIDNFDS…MKLKGGTWEE (196 aa)). 63–65 (GPG) is an L-glutamine binding site. Cys91 (nucleophile; for GATase activity) is an active-site residue. Residue 141–142 (SL) participates in L-glutamine binding. Residues His181 and Glu183 each act as for GATase activity in the active site. The indole-3-glycerol phosphate synthase stretch occupies residues 238-503 (ILEKICAQRQ…DTRAFIRQLL (266 aa)). The segment at 520-788 (LSRSCGIRTE…RAFVKAAKKL (269 aa)) is N-(5'-phosphoribosyl)anthranilate isomerase.

The catalysed reaction is N-(5-phospho-beta-D-ribosyl)anthranilate = 1-(2-carboxyphenylamino)-1-deoxy-D-ribulose 5-phosphate. It carries out the reaction 1-(2-carboxyphenylamino)-1-deoxy-D-ribulose 5-phosphate + H(+) = (1S,2R)-1-C-(indol-3-yl)glycerol 3-phosphate + CO2 + H2O. The enzyme catalyses chorismate + L-glutamine = anthranilate + pyruvate + L-glutamate + H(+). It functions in the pathway amino-acid biosynthesis; L-tryptophan biosynthesis; L-tryptophan from chorismate: step 1/5. It participates in amino-acid biosynthesis; L-tryptophan biosynthesis; L-tryptophan from chorismate: step 3/5. Its pathway is amino-acid biosynthesis; L-tryptophan biosynthesis; L-tryptophan from chorismate: step 4/5. In terms of biological role, trifunctional enzyme bearing the Gln amidotransferase (GATase) domain of anthranilate synthase, indole-glycerolphosphate synthase, and phosphoribosylanthranilate isomerase activities. In Phanerodontia chrysosporium (White-rot fungus), this protein is Multifunctional tryptophan biosynthesis protein (TRPC).